Reading from the N-terminus, the 1941-residue chain is Myosin light chain kinase, smooth muscle (1941 aa).

Ig-like C2-type domains follow at residues 33–122 (PAFI…VELT) and 156–244 (PKFA…AELS). An intrachain disulfide couples C177 to C228. Y226 is modified (phosphotyrosine; by ABL1). A disordered region spans residues 255–329 (AVRGTKAPSP…RKVPQSSILQ (75 aa)). The segment covering 286–305 (NCPSPQRSGSSARATNSHLK) has biased composition (polar residues). Phosphoserine is present on S295. Positions 306–320 (SPQEPKPKLCEDAPR) are enriched in basic and acidic residues. A phosphoserine mark is found at S333 and S355. 4 Ig-like C2-type domains span residues 402–485 (PRFE…GQVS), 502–587 (PSFS…ATVT), 611–699 (PIFL…AVLT), and 709–809 (PWFI…APPR). 2 disulfides stabilise this stretch: C423-C475 and C523-C571. At Y452 the chain carries Phosphotyrosine; by ABL1 and SRC. Residues C730 and C793 are joined by a disulfide bond. Y780 carries the post-translational modification Phosphotyrosine; by ABL1. 4 repeat units span residues 856-883 (DVRG…VGQL), 884-911 (DFRD…AEQM), 912-939 (DFRA…PQQV), and 940-966 (DFRS…AATP). Residues 856-985 (DVRGLLKRRV…KKSPSENGGN (130 aa)) form a 5 X 28 AA approximate tandem repeats region. The actin-binding (calcium/calmodulin-sensitive) stretch occupies residues 911–951 (MDFRANLQRQVKPKTISEEERKVHSPQQVDFRSVLAKKGTP). Residues 920–1120 (QVKPKTISEE…KRPESQGSAP (201 aa)) are disordered. Position 935 is a phosphoserine (S935). The tract at residues 936–951 (PQQVDFRSVLAKKGTP) is calmodulin-binding. A 1-5; truncated repeat occupies 967-985 (DFRSVLGGKKKSPSENGGN). 5 tandem repeats follow at residues 990–1002 (LNVK…TPAG), 1003–1014 (DAQAIGALKPVG), 1015–1026 (NAKPAETPKPIG), 1027–1038 (NAKPTETLKPVG), and 1039–1049 (NTKPAETLKPI). Residues 990 to 1049 (LNVKAGESPTPAGDAQAIGALKPVGNAKPAETPKPIGNAKPTETLKPVGNTKPAETLKPI) form a 5 X 12 AA approximate tandem repeats region. The tract at residues 1048-1482 (PIANAQPSGS…TVTVNTEQKV (435 aa)) is actin-binding (calcium/calmodulin-insensitive). Residues 1052–1065 (AQPSGSLKPVTNAQ) show a composition bias toward polar residues. Residues 1085–1099 (AGKEEVKEVKNDVNC) are compositionally biased toward basic and acidic residues. The Ig-like C2-type 7 domain maps to 1120 to 1208 (PVFKEKLQDV…GQAECSCQVT (89 aa)). Residues C1141 and C1192 are joined by a disulfide bond. Residues 1212 to 1257 (AQTSENTKAPEMKSRRPKSSLPPVLGTESDATVKKKPAPKTPTKAA) form a disordered region. Residues 1260-1348 (PQIIQFPEDQ…GSRQAQVNLT (89 aa)) form the Ig-like C2-type 8 domain. The Fibronectin type-III domain maps to 1356–1449 (PAGTPCASDI…ESELTAVGEK (94 aa)). Positions 1435–1469 (SEPSQESELTAVGEKPEEPKDEVEVSDDDEKEPEV) are disordered. Residues 1453 to 1467 (PKDEVEVSDDDEKEP) are compositionally biased toward acidic residues. S1460 carries the post-translational modification Phosphoserine. Y1471 carries the phosphotyrosine; by ABL1 modification. The Protein kinase domain occupies 1486–1741 (YDIEERLGSG…CTQCLQHPWL (256 aa)). ATP contacts are provided by residues 1492–1500 (LGSGKFGQV) and K1515. The residue at position 1597 (Y1597) is a Phosphotyrosine; by ABL1. D1607 (proton acceptor) is an active-site residue. The residue at position 1657 (Y1657) is a Phosphotyrosine; by ABL1. The calmodulin-binding stretch occupies residues 1733 to 1796 (TQCLQHPWLM…SGLSGRKSST (64 aa)). Phosphoserine is present on residues S1781, S1782, S1794, S1795, and S1798. The disordered stretch occupies residues 1789–1809 (LSGRKSSTGSPTSPINAEKLE). Polar residues predominate over residues 1792–1803 (RKSSTGSPTSPI). Position 1800 is a phosphothreonine (T1800). S1801 bears the Phosphoserine mark. An Ig-like C2-type 9 domain is found at 1831–1920 (PYFSKTIRDL…GEATCTAELI (90 aa)). Cysteines 1852 and 1904 form a disulfide.

It belongs to the protein kinase superfamily. CAMK Ser/Thr protein kinase family. In terms of assembly, all isoforms including Telokin bind calmodulin. Interacts with CTTN; this interaction is reduced during thrombin-induced endothelial cell (EC) contraction but is promoted by the barrier-protective agonist sphingosine 1-phosphate (S1P) within lamellipodia. A complex made of ABL1, CTTN and MYLK regulates cortical actin-based cytoskeletal rearrangement critical to sphingosine 1-phosphate (S1P)-mediated endothelial cell (EC) barrier enhancement. Binds to NAA10/ARD1. Interacts with SVIL and PTK2B/PYK2. The cofactor is Mg(2+). Requires Ca(2+) as cofactor. In terms of processing, can probably be down-regulated by phosphorylation. Tyrosine phosphorylation by ABL1 increases kinase activity, reverses MLCK-mediated inhibition of Arp2/3-mediated actin polymerization, and enhances CTTN-binding. Phosphorylation by SRC at Tyr-452 promotes CTTN binding. The C-terminus is deglutamylated by AGTPBP1/CCP1, AGBL1/CCP4 and AGBL4/CCP6, leading to the formation of Myosin light chain kinase, smooth muscle, deglutamylated form. The consequences of C-terminal deglutamylation are unknown. In terms of tissue distribution, smooth muscle isoform is expressed in all tissues with highest levels in bladder, uterus, vas deferens, colon, ileum, and tracheae. Isoform 1 is expressed in lung, bladder, and vas deferens. Telokin is expressed in smooth muscle cells of the gut, reproductive tract and urinary tract, including in uterus, vas deferens, bladder, colon, kidney, ureter and ovary. Telokin is also detected in the trachea.

The protein localises to the cytoplasm. It is found in the cell projection. It localises to the lamellipodium. The protein resides in the cleavage furrow. Its subcellular location is the cytoskeleton. The protein localises to the stress fiber. The enzyme catalyses L-seryl-[myosin light chain] + ATP = O-phospho-L-seryl-[myosin light chain] + ADP + H(+). It carries out the reaction L-threonyl-[myosin light chain] + ATP = O-phospho-L-threonyl-[myosin light chain] + ADP + H(+). In terms of biological role, calcium/calmodulin-dependent myosin light chain kinase implicated in smooth muscle contraction via phosphorylation of myosin light chains (MLC). Also regulates actin-myosin interaction through a non-kinase activity. Phosphorylates PTK2B/PYK2 and myosin light-chains. Involved in the inflammatory response (e.g. apoptosis, vascular permeability, leukocyte diapedesis), cell motility and morphology, airway hyperreactivity and other activities relevant to asthma. Required for tonic airway smooth muscle contraction that is necessary for physiological and asthmatic airway resistance. Necessary for gastrointestinal motility. Implicated in the regulation of endothelial as well as vascular permeability, probably via the regulation of cytoskeletal rearrangements. In the nervous system it has been shown to control the growth initiation of astrocytic processes in culture and to participate in transmitter release at synapses formed between cultured sympathetic ganglion cells. Critical participant in signaling sequences that result in fibroblast apoptosis. Plays a role in the regulation of epithelial cell survival. Required for epithelial wound healing, especially during actomyosin ring contraction during purse-string wound closure. Mediates RhoA-dependent membrane blebbing. Triggers TRPC5 channel activity in a calcium-dependent signaling, by inducing its subcellular localization at the plasma membrane. Promotes cell migration (including tumor cells) and tumor metastasis. PTK2B/PYK2 activation by phosphorylation mediates ITGB2 activation and is thus essential to trigger neutrophil transmigration during acute lung injury (ALI). May regulate optic nerve head astrocyte migration. Probably involved in mitotic cytoskeletal regulation. Regulates tight junction probably by modulating ZO-1 exchange in the perijunctional actomyosin ring. Mediates burn-induced microvascular barrier injury; triggers endothelial contraction in the development of microvascular hyperpermeability by phosphorylating MLC. Essential for intestinal barrier dysfunction. Mediates Giardia spp.-mediated reduced epithelial barrier function during giardiasis intestinal infection via reorganization of cytoskeletal F-actin and tight junctional ZO-1. Necessary for hypotonicity-induced Ca(2+) entry and subsequent activation of volume-sensitive organic osmolyte/anion channels (VSOAC) in cervical cancer cells. This Mus musculus (Mouse) protein is Myosin light chain kinase, smooth muscle.